We begin with the raw amino-acid sequence, 2059 residues long: Desmoplakin-A (2059 aa).

Residues M1–H11 are compositionally biased toward polar residues. The disordered stretch occupies residues M1–A25. Coiled-coil stretches lie at residues I320–N354 and F397–L453. The disordered stretch occupies residues E665–S690. Positions T671–S690 are enriched in low complexity. Coiled-coil stretches lie at residues M1062–E1229 and L1261–R1383. Plectin repeat units lie at residues Y1450–L1488, L1489–L1526, L1564–L1602, I1666–L1694, L1847–L1885, and F1923–L1961. The tract at residues K2008–S2059 is disordered. Residues S2011–S2059 are compositionally biased toward low complexity.

Belongs to the plakin or cytolinker family.

It is found in the cell junction. The protein resides in the desmosome. Its subcellular location is the cell membrane. Functionally, involved in the organization of desmosome cell-cell junctions. Of particular importance in cell adhesion in the skin and during cardiac development. May also play a role in the regulation of Wnt, TGF-beta and Hippo signaling pathways. The protein is Desmoplakin-A of Danio rerio (Zebrafish).